The chain runs to 237 residues: Ribosomal RNA small subunit methyltransferase G (237 aa).

S-adenosyl-L-methionine contacts are provided by residues G78, F83, A129–E130, and R148.

Belongs to the methyltransferase superfamily. RNA methyltransferase RsmG family.

The protein resides in the cytoplasm. In terms of biological role, specifically methylates the N7 position of a guanine in 16S rRNA. This chain is Ribosomal RNA small subunit methyltransferase G, found in Streptococcus equi subsp. zooepidemicus (strain H70).